A 478-amino-acid polypeptide reads, in one-letter code: Chromosomal replication initiator protein DnaA (478 aa).

Residues 1–82 (MHTMNKTAES…ELGKNAKLLY (82 aa)) form a domain I, interacts with DnaA modulators region. The tract at residues 82 to 140 (YKIKMENTYGNKLPFTEQLPSAHRSPVRTQEIDVPVQQKNPELRNPFIIPGIRNLKIES) is domain II. A domain III, AAA+ region region spans residues 141–358 (QLNANYSFDN…GAIISLIAQS (218 aa)). Residues Gly186, Gly188, Lys189, and Thr190 each coordinate ATP. The domain IV, binds dsDNA stretch occupies residues 359 to 478 (SFNKKEVTLE…VDDINKKLSL (120 aa)).

This sequence belongs to the DnaA family. In terms of assembly, oligomerizes as a right-handed, spiral filament on DNA at oriC.

The protein localises to the cytoplasm. Plays an essential role in the initiation and regulation of chromosomal replication. ATP-DnaA binds to the origin of replication (oriC) to initiate formation of the DNA replication initiation complex once per cell cycle. Binds the DnaA box (a 9 base pair repeat at the origin) and separates the double-stranded (ds)DNA. Forms a right-handed helical filament on oriC DNA; dsDNA binds to the exterior of the filament while single-stranded (ss)DNA is stabiized in the filament's interior. The ATP-DnaA-oriC complex binds and stabilizes one strand of the AT-rich DNA unwinding element (DUE), permitting loading of DNA polymerase. After initiation quickly degrades to an ADP-DnaA complex that is not apt for DNA replication. Binds acidic phospholipids. The polypeptide is Chromosomal replication initiator protein DnaA (Flavobacterium psychrophilum (strain ATCC 49511 / DSM 21280 / CIP 103535 / JIP02/86)).